We begin with the raw amino-acid sequence, 239 residues long: Dolichyldiphosphatase (239 aa).

Topologically, residues 1 to 34 (MNSTAAAINPNPNVIPFDDTYILYDSHDFLSFLS) are lumenal. A helical membrane pass occupies residues 35 to 55 (AYFSLMPILVLAFYLSWFIIT). Over 56 to 131 (RELEACIVAF…KIYTSWKNLN (76 aa)) the chain is Cytoplasmic. The chain crosses the membrane as a helical span at residues 132–152 (FLEKCIFSGALALLSFCVCFS). The Lumenal segment spans residues 153-164 (RVYLHYHNLDQV). A helical transmembrane segment spans residues 165–185 (IVGFSVGALTGSLYFFIVGII). At 186–239 (RELGLINWFLKLRIVRLFYMTDSYNLAPLTLKENYEAYWKRINQRSFNDKSKRD) the chain is on the cytoplasmic side.

This sequence belongs to the dolichyldiphosphatase family.

The protein localises to the endoplasmic reticulum membrane. It catalyses the reaction a di-trans,poly-cis-dolichyl diphosphate + H2O = a di-trans,poly-cis-dolichyl phosphate + phosphate + H(+). The protein operates within protein modification; protein glycosylation. In terms of biological role, non-essential protein which is required for efficient N-glycosylation. Necessary for maintaining optimal levels of dolichol-linked oligosaccharides. Hydrolyzes dolichyl pyrophosphate at a very high rate and dolichyl monophosphate at a much lower rate. Does not act on phosphatidate. The polypeptide is Dolichyldiphosphatase (CAX4) (Saccharomyces cerevisiae (strain ATCC 204508 / S288c) (Baker's yeast)).